Consider the following 404-residue polypeptide: Argininosuccinate synthase (404 aa).

ATP contacts are provided by residues 10–18 (AYSGGVDTS) and alanine 38. Tyrosine 89 contacts L-citrulline. Glycine 119 serves as a coordination point for ATP. Residues threonine 121, asparagine 125, and aspartate 126 each contribute to the L-aspartate site. Residue asparagine 125 coordinates L-citrulline. The L-citrulline site is built by arginine 129, serine 177, serine 186, glutamate 262, and tyrosine 274.

This sequence belongs to the argininosuccinate synthase family. Type 1 subfamily. Homotetramer.

It localises to the cytoplasm. It carries out the reaction L-citrulline + L-aspartate + ATP = 2-(N(omega)-L-arginino)succinate + AMP + diphosphate + H(+). Its pathway is amino-acid biosynthesis; L-arginine biosynthesis; L-arginine from L-ornithine and carbamoyl phosphate: step 2/3. In Prochlorococcus marinus subsp. pastoris (strain CCMP1986 / NIES-2087 / MED4), this protein is Argininosuccinate synthase.